A 326-amino-acid polypeptide reads, in one-letter code: Glycerol-3-phosphate dehydrogenase [NAD(P)+] (326 aa).

3 residues coordinate NADPH: Trp-15, Arg-35, and Lys-107. Sn-glycerol 3-phosphate contacts are provided by Lys-107, Gly-135, and Ser-137. Ala-139 is an NADPH binding site. Sn-glycerol 3-phosphate is bound by residues Lys-190, Asp-243, Ser-253, Arg-254, and Asn-255. Lys-190 functions as the Proton acceptor in the catalytic mechanism. Arg-254 is an NADPH binding site. Residues Leu-273 and Glu-275 each coordinate NADPH.

This sequence belongs to the NAD-dependent glycerol-3-phosphate dehydrogenase family.

The protein localises to the cytoplasm. It catalyses the reaction sn-glycerol 3-phosphate + NAD(+) = dihydroxyacetone phosphate + NADH + H(+). The enzyme catalyses sn-glycerol 3-phosphate + NADP(+) = dihydroxyacetone phosphate + NADPH + H(+). It functions in the pathway membrane lipid metabolism; glycerophospholipid metabolism. In terms of biological role, catalyzes the reduction of the glycolytic intermediate dihydroxyacetone phosphate (DHAP) to sn-glycerol 3-phosphate (G3P), the key precursor for phospholipid synthesis. The sequence is that of Glycerol-3-phosphate dehydrogenase [NAD(P)+] from Bradyrhizobium diazoefficiens (strain JCM 10833 / BCRC 13528 / IAM 13628 / NBRC 14792 / USDA 110).